We begin with the raw amino-acid sequence, 158 residues long: NADH-quinone oxidoreductase subunit B (158 aa).

4 residues coordinate [4Fe-4S] cluster: Cys36, Cys37, Cys101, and Cys131.

The protein belongs to the complex I 20 kDa subunit family. NDH-1 is composed of 14 different subunits. Subunits NuoB, C, D, E, F, and G constitute the peripheral sector of the complex. [4Fe-4S] cluster serves as cofactor.

It localises to the cell inner membrane. It carries out the reaction a quinone + NADH + 5 H(+)(in) = a quinol + NAD(+) + 4 H(+)(out). Its function is as follows. NDH-1 shuttles electrons from NADH, via FMN and iron-sulfur (Fe-S) centers, to quinones in the respiratory chain. The immediate electron acceptor for the enzyme in this species is believed to be ubiquinone. Couples the redox reaction to proton translocation (for every two electrons transferred, four hydrogen ions are translocated across the cytoplasmic membrane), and thus conserves the redox energy in a proton gradient. The protein is NADH-quinone oxidoreductase subunit B of Francisella tularensis subsp. tularensis (strain FSC 198).